The sequence spans 248 residues: 3-deoxy-manno-octulosonate cytidylyltransferase (248 aa).

It belongs to the KdsB family.

It is found in the cytoplasm. It catalyses the reaction 3-deoxy-alpha-D-manno-oct-2-ulosonate + CTP = CMP-3-deoxy-beta-D-manno-octulosonate + diphosphate. Its pathway is nucleotide-sugar biosynthesis; CMP-3-deoxy-D-manno-octulosonate biosynthesis; CMP-3-deoxy-D-manno-octulosonate from 3-deoxy-D-manno-octulosonate and CTP: step 1/1. The protein operates within bacterial outer membrane biogenesis; lipopolysaccharide biosynthesis. In terms of biological role, activates KDO (a required 8-carbon sugar) for incorporation into bacterial lipopolysaccharide in Gram-negative bacteria. This Klebsiella pneumoniae (strain 342) protein is 3-deoxy-manno-octulosonate cytidylyltransferase.